Reading from the N-terminus, the 319-residue chain is Probable casein kinase II subunit alpha homolog (319 aa).

Positions 37–316 (YQIYQRMGRG…ADECLRHPLF (280 aa)) constitute a Protein kinase domain. ATP is bound by residues 43–51 (MGRGKYSEV) and lysine 64. Catalysis depends on aspartate 151, which acts as the Proton acceptor.

The protein belongs to the protein kinase superfamily. Ser/Thr protein kinase family. CK2 subfamily. In terms of assembly, tetramer composed of two alpha chains, one beta chain and one beta' chain.

It carries out the reaction L-seryl-[protein] + ATP = O-phospho-L-seryl-[protein] + ADP + H(+). The enzyme catalyses L-threonyl-[protein] + ATP = O-phospho-L-threonyl-[protein] + ADP + H(+). Catalytic subunit of a constitutively active serine/threonine-protein kinase complex that phosphorylates a large number of substrates containing acidic residues C-terminal to the phosphorylated serine or threonine. This is Probable casein kinase II subunit alpha homolog (CKA1) from Encephalitozoon cuniculi (strain GB-M1) (Microsporidian parasite).